A 426-amino-acid polypeptide reads, in one-letter code: Serine--tRNA ligase (426 aa).

Residue T235–E237 participates in L-serine binding. R266–E268 contacts ATP. E289 provides a ligand contact to L-serine. Residue E353–S356 coordinates ATP. An L-serine-binding site is contributed by S389.

This sequence belongs to the class-II aminoacyl-tRNA synthetase family. Type-1 seryl-tRNA synthetase subfamily. As to quaternary structure, homodimer. The tRNA molecule binds across the dimer.

It localises to the cytoplasm. The enzyme catalyses tRNA(Ser) + L-serine + ATP = L-seryl-tRNA(Ser) + AMP + diphosphate + H(+). The catalysed reaction is tRNA(Sec) + L-serine + ATP = L-seryl-tRNA(Sec) + AMP + diphosphate + H(+). Its pathway is aminoacyl-tRNA biosynthesis; selenocysteinyl-tRNA(Sec) biosynthesis; L-seryl-tRNA(Sec) from L-serine and tRNA(Sec): step 1/1. Catalyzes the attachment of serine to tRNA(Ser). Is also able to aminoacylate tRNA(Sec) with serine, to form the misacylated tRNA L-seryl-tRNA(Sec), which will be further converted into selenocysteinyl-tRNA(Sec). This chain is Serine--tRNA ligase, found in Trichormus variabilis (strain ATCC 29413 / PCC 7937) (Anabaena variabilis).